The chain runs to 194 residues: Molybdenum cofactor guanylyltransferase (194 aa).

GTP contacts are provided by residues 12-14, Lys25, Asn53, Asp71, and Asp101; that span reads LAG. Mg(2+) is bound at residue Asp101.

Belongs to the MobA family. As to quaternary structure, monomer. Requires Mg(2+) as cofactor.

It localises to the cytoplasm. It catalyses the reaction Mo-molybdopterin + GTP + H(+) = Mo-molybdopterin guanine dinucleotide + diphosphate. In terms of biological role, transfers a GMP moiety from GTP to Mo-molybdopterin (Mo-MPT) cofactor (Moco or molybdenum cofactor) to form Mo-molybdopterin guanine dinucleotide (Mo-MGD) cofactor. The protein is Molybdenum cofactor guanylyltransferase of Escherichia coli O157:H7.